A 716-amino-acid polypeptide reads, in one-letter code: Polyribonucleotide nucleotidyltransferase (716 aa).

Residues aspartate 480 and aspartate 486 each coordinate Mg(2+). The KH domain occupies 547–606; that stretch reads PKIVQLQIDIDKISLVIGSTGKTVKAITDEFEVKVQIEQNGKIILFGDDDFKMQKAKERI. One can recognise an S1 motif domain in the interval 616-711; that stretch reads GEIYEGTVKK…KFGKIDLEIV (96 aa).

Belongs to the polyribonucleotide nucleotidyltransferase family. The cofactor is Mg(2+).

It is found in the cytoplasm. The enzyme catalyses RNA(n+1) + phosphate = RNA(n) + a ribonucleoside 5'-diphosphate. Involved in mRNA degradation. Catalyzes the phosphorolysis of single-stranded polyribonucleotides processively in the 3'- to 5'-direction. The sequence is that of Polyribonucleotide nucleotidyltransferase from Borreliella burgdorferi (strain ATCC 35210 / DSM 4680 / CIP 102532 / B31) (Borrelia burgdorferi).